An 887-amino-acid chain; its full sequence is Translation initiation factor IF-2 (887 aa).

The disordered stretch occupies residues 1–259 (MSDEQDQGET…KVGDDRRRGA (259 aa)). Positions 62-94 (GRPSAPSRASGGAAAPRGLTAAEQAARQRAVVE) are enriched in low complexity. 2 stretches are compositionally biased toward basic and acidic residues: residues 95 to 111 (QQREAARLEAERREQEK) and 119 to 158 (EEARRKAEEEARAAEEAERLRAEEEARRREEEEAERRRAA). The segment covering 159 to 210 (EASQATAAPPAPAAAASPRAAMPAPTAAPARPGAAPARRTAPVPPATSASET) has biased composition (low complexity). Residues 250–259 (KVGDDRRRGA) are compositionally biased toward basic and acidic residues. In terms of domain architecture, tr-type G spans 386-556 (VRPPVVTIMG…LLQAELLDLK (171 aa)). Residues 395-402 (GHVDHGKT) form a G1 region. 395–402 (GHVDHGKT) provides a ligand contact to GTP. Residues 420 to 424 (GITQH) are G2. The tract at residues 442–445 (DTPG) is G3. Residues 442-446 (DTPGH) and 496-499 (NKID) each bind GTP. Positions 496–499 (NKID) are G4. The tract at residues 532 to 534 (SAL) is G5.

It belongs to the TRAFAC class translation factor GTPase superfamily. Classic translation factor GTPase family. IF-2 subfamily.

The protein resides in the cytoplasm. In terms of biological role, one of the essential components for the initiation of protein synthesis. Protects formylmethionyl-tRNA from spontaneous hydrolysis and promotes its binding to the 30S ribosomal subunits. Also involved in the hydrolysis of GTP during the formation of the 70S ribosomal complex. This chain is Translation initiation factor IF-2, found in Acidiphilium cryptum (strain JF-5).